We begin with the raw amino-acid sequence, 141 residues long: Prefoldin subunit alpha (141 aa).

The protein belongs to the prefoldin subunit alpha family. In terms of assembly, heterohexamer of two alpha and four beta subunits.

It localises to the cytoplasm. Molecular chaperone capable of stabilizing a range of proteins. Seems to fulfill an ATP-independent, HSP70-like function in archaeal de novo protein folding. The chain is Prefoldin subunit alpha (pfdA) from Methanothermobacter thermautotrophicus (strain ATCC 29096 / DSM 1053 / JCM 10044 / NBRC 100330 / Delta H) (Methanobacterium thermoautotrophicum).